We begin with the raw amino-acid sequence, 168 residues long: Phosphopantetheine adenylyltransferase (168 aa).

Residue Thr14 coordinates substrate. ATP is bound by residues 14–15 (TF) and His22. Substrate-binding residues include Lys46, Leu78, and Arg92. ATP-binding positions include 93 to 95 (GLR), Glu103, and 128 to 134 (YSFISSS).

Belongs to the bacterial CoaD family. Homohexamer. Mg(2+) serves as cofactor.

Its subcellular location is the cytoplasm. The enzyme catalyses (R)-4'-phosphopantetheine + ATP + H(+) = 3'-dephospho-CoA + diphosphate. The protein operates within cofactor biosynthesis; coenzyme A biosynthesis; CoA from (R)-pantothenate: step 4/5. Its function is as follows. Reversibly transfers an adenylyl group from ATP to 4'-phosphopantetheine, yielding dephospho-CoA (dPCoA) and pyrophosphate. The chain is Phosphopantetheine adenylyltransferase from Xanthomonas axonopodis pv. citri (strain 306).